Here is a 224-residue protein sequence, read N- to C-terminus: Urease accessory protein UreF (224 aa).

Belongs to the UreF family. UreD, UreF and UreG form a complex that acts as a GTP-hydrolysis-dependent molecular chaperone, activating the urease apoprotein by helping to assemble the nickel containing metallocenter of UreC. The UreE protein probably delivers the nickel.

Its subcellular location is the cytoplasm. Required for maturation of urease via the functional incorporation of the urease nickel metallocenter. In Pseudomonas fluorescens (strain Pf0-1), this protein is Urease accessory protein UreF.